The following is a 392-amino-acid chain: Flagellar P-ring protein (392 aa).

The signal sequence occupies residues 1–38 (MKPFARRALLTAEPIRALLLAASLLAATLGLMPAEAFG).

The protein belongs to the FlgI family. As to quaternary structure, the basal body constitutes a major portion of the flagellar organelle and consists of four rings (L,P,S, and M) mounted on a central rod.

Its subcellular location is the periplasm. It localises to the bacterial flagellum basal body. Functionally, assembles around the rod to form the L-ring and probably protects the motor/basal body from shearing forces during rotation. In Paramagnetospirillum magneticum (strain ATCC 700264 / AMB-1) (Magnetospirillum magneticum), this protein is Flagellar P-ring protein.